Consider the following 502-residue polypeptide: ATP synthase subunit alpha (502 aa).

169 to 176 serves as a coordination point for ATP; sequence GDRQTGKT.

The protein belongs to the ATPase alpha/beta chains family. As to quaternary structure, F-type ATPases have 2 components, CF(1) - the catalytic core - and CF(0) - the membrane proton channel. CF(1) has five subunits: alpha(3), beta(3), gamma(1), delta(1), epsilon(1). CF(0) has three main subunits: a(1), b(2) and c(9-12). The alpha and beta chains form an alternating ring which encloses part of the gamma chain. CF(1) is attached to CF(0) by a central stalk formed by the gamma and epsilon chains, while a peripheral stalk is formed by the delta and b chains.

It is found in the cell inner membrane. It carries out the reaction ATP + H2O + 4 H(+)(in) = ADP + phosphate + 5 H(+)(out). Functionally, produces ATP from ADP in the presence of a proton gradient across the membrane. The alpha chain is a regulatory subunit. This is ATP synthase subunit alpha from Oleidesulfovibrio alaskensis (strain ATCC BAA-1058 / DSM 17464 / G20) (Desulfovibrio alaskensis).